Reading from the N-terminus, the 152-residue chain is Nucleoside diphosphate kinase A 2 (152 aa).

ATP contacts are provided by K12, F60, R88, T94, R105, and N115. Residue H118 is the Pros-phosphohistidine intermediate of the active site.

This sequence belongs to the NDK family. In terms of assembly, homohexamer. Requires Mg(2+) as cofactor. The N-terminus is blocked.

It is found in the cytoplasm. Its subcellular location is the cell membrane. It localises to the nucleus. It carries out the reaction a 2'-deoxyribonucleoside 5'-diphosphate + ATP = a 2'-deoxyribonucleoside 5'-triphosphate + ADP. The catalysed reaction is a ribonucleoside 5'-diphosphate + ATP = a ribonucleoside 5'-triphosphate + ADP. With respect to regulation, autophosphorylation at His-118 increases serine/threonine protein kinase activity of the enzyme. Interaction with the SET complex inhibits exonuclease activity. In terms of biological role, major role in the synthesis of nucleoside triphosphates other than ATP. Possesses nucleoside-diphosphate kinase, serine/threonine-specific protein kinase, geranyl and farnesyl pyrophosphate kinase, histidine protein kinase and 3'-5' exonuclease activities. Involved in cell proliferation, differentiation and development, signal transduction, G protein-coupled receptor endocytosis, and gene expression. Required for neural development including neural patterning and cell fate determination. This is Nucleoside diphosphate kinase A 2 (NME1-2) from Bos taurus (Bovine).